Consider the following 534-residue polypeptide: Peptide chain release factor 3 (534 aa).

Residues 9–278 enclose the tr-type G domain; that stretch reads ARRRTFAIIS…FFIEHAPPPQ (270 aa). GTP-binding positions include 18–25, 86–90, and 140–143; these read SHPDAGKT, DTPGH, and NKLD.

It belongs to the TRAFAC class translation factor GTPase superfamily. Classic translation factor GTPase family. PrfC subfamily.

It localises to the cytoplasm. In terms of biological role, increases the formation of ribosomal termination complexes and stimulates activities of RF-1 and RF-2. It binds guanine nucleotides and has strong preference for UGA stop codons. It may interact directly with the ribosome. The stimulation of RF-1 and RF-2 is significantly reduced by GTP and GDP, but not by GMP. In Xanthomonas oryzae pv. oryzae (strain MAFF 311018), this protein is Peptide chain release factor 3.